The primary structure comprises 709 residues: Probable lanosterol 14-alpha demethylase (709 aa).

C425 provides a ligand contact to heme.

The protein belongs to the cytochrome P450 family. Heme serves as cofactor.

Its subcellular location is the membrane. The catalysed reaction is a 14alpha-methyl steroid + 3 reduced [NADPH--hemoprotein reductase] + 3 O2 = a Delta(14) steroid + formate + 3 oxidized [NADPH--hemoprotein reductase] + 4 H2O + 4 H(+). The protein operates within steroid biosynthesis; zymosterol biosynthesis; zymosterol from lanosterol: step 1/6. Functionally, catalyzes the 14-alpha demethylation of obtusifoliol to 4 alpha-methyl-5 alpha-ergosta-8,14,24(28)-trien-3 beta-ol. This chain is Probable lanosterol 14-alpha demethylase, found in Acanthamoeba polyphaga (Amoeba).